The following is a 177-amino-acid chain: uncharacterized protein (177 aa).

To B.subtilis YutG.

This is an uncharacterized protein from Bacillus subtilis (strain 168).